We begin with the raw amino-acid sequence, 602 residues long: MKEYKLENIRNFSIIAHIDHGKSTIADRLLESTSTVEQREMREQLLDSMDLERERGITIKAHPVTMYYEYNGEVYQLNLIDTPGHVDFSYEVSRSLAACEGALLIVDAAQGVQAQSLANVYLALERDLEIIPILNKIDLPAANPERIRKQIEDYIGLDTTHAIACSAKTGEGISEILEAIIELIPPPKLPEETELKALIFDSHYDPYVGIMVYVRVISGEIKKGDRITFMATKGSAFEVLGVGAFLPEATLIEGSLRAGQVGYFIANLKKVKDVKIGDTVTTVKHPAKVPLDGFKEINPVVFAGIYPIDSSDFDTLKDALGRLQLNDSALTIEQESSHSLGFGFRCGFLGLLHLEIVFERIIREFDLDIIATAPSVIYKIVLKNGKTLFIDNPTAYPDPSIIEHLEEPWVHVNIITPQEYLSSIMNLCLDKRGVCLKTEMLDQHRLVLSYDLPLNEIVSDFNDKLKSVTKGYGSFDYRLGDYRKGSIIKLEILINDEPVDAFSCLVHRDKAEARGRSICEKLVDVIPQQLFKIPIQAAINKKVIARETIRALSKNVTAKCYGGDITRKRKLWEKQKKGKKRMKEFGKVSIPNTAFIEVLKID.

Residues E7–K188 form the tr-type G domain. GTP is bound by residues D19 to T24 and N135 to D138.

This sequence belongs to the TRAFAC class translation factor GTPase superfamily. Classic translation factor GTPase family. LepA subfamily.

The protein localises to the cell inner membrane. It catalyses the reaction GTP + H2O = GDP + phosphate + H(+). Required for accurate and efficient protein synthesis under certain stress conditions. May act as a fidelity factor of the translation reaction, by catalyzing a one-codon backward translocation of tRNAs on improperly translocated ribosomes. Back-translocation proceeds from a post-translocation (POST) complex to a pre-translocation (PRE) complex, thus giving elongation factor G a second chance to translocate the tRNAs correctly. Binds to ribosomes in a GTP-dependent manner. The polypeptide is Elongation factor 4 (Chlamydia caviae (strain ATCC VR-813 / DSM 19441 / 03DC25 / GPIC) (Chlamydophila caviae)).